The primary structure comprises 710 residues: Putative transmembrane protein ORF710 (710 aa).

Residues 1 to 33 (MKLDRKKKRLLLKTIFSIVILILPLTFLHPTNS) form the signal peptide. The next 3 membrane-spanning stretches (helical) occupy residues 41-61 (VPIQIIYNYNVSGGVIYTAPL), 76-95 (YGTLLYSYLFSTNPAFVVWY), and 689-709 (VAIVSMAYGTKIWIGVFIFAI).

It is found in the host membrane. The polypeptide is Putative transmembrane protein ORF710 (Acidianus convivator (ATV)).